Reading from the N-terminus, the 671-residue chain is tRNA 5-methylaminomethyl-2-thiouridine biosynthesis bifunctional protein MnmC (671 aa).

Positions 1–245 are tRNA (mnm(5)s(2)U34)-methyltransferase; that stretch reads MVNVMNTLSF…KREMLWGEKP (245 aa). The tract at residues 272 to 671 is FAD-dependent cmnm(5)s(2)U34 oxidoreductase; the sequence is VGGGVASLFV…RKLLKGSKVE (400 aa).

In the N-terminal section; belongs to the methyltransferase superfamily. tRNA (mnm(5)s(2)U34)-methyltransferase family. The protein in the C-terminal section; belongs to the DAO family. It depends on FAD as a cofactor.

It localises to the cytoplasm. The enzyme catalyses 5-aminomethyl-2-thiouridine(34) in tRNA + S-adenosyl-L-methionine = 5-methylaminomethyl-2-thiouridine(34) in tRNA + S-adenosyl-L-homocysteine + H(+). Its function is as follows. Catalyzes the last two steps in the biosynthesis of 5-methylaminomethyl-2-thiouridine (mnm(5)s(2)U) at the wobble position (U34) in tRNA. Catalyzes the FAD-dependent demodification of cmnm(5)s(2)U34 to nm(5)s(2)U34, followed by the transfer of a methyl group from S-adenosyl-L-methionine to nm(5)s(2)U34, to form mnm(5)s(2)U34. In Actinobacillus pleuropneumoniae serotype 3 (strain JL03), this protein is tRNA 5-methylaminomethyl-2-thiouridine biosynthesis bifunctional protein MnmC.